Reading from the N-terminus, the 234-residue chain is MKNMLLMSGSKYKDTAYLVHTLPWLAQFLADYKGKKVAFVPYAGVRRSFDEYETTVQNALQSLELEIVSVHRGKQHRDIIEQADVIAIGGGNTFCLLKQMYEHDLLDAIRAKVNSGTPYFGWSAGANVAGSSIMTTNDMPITYPPSFNALNLFPHQINPHFISGKMQGHNGESREERLEEFLIVNPQSLVYAMPEGTALHIQGEQATVLGAQDILCFSEKMQLDTKAVNSTFNY.

Residues serine 123, aspartate 138, and histidine 160 each act as charge relay system in the active site.

Belongs to the peptidase S51 family.

It localises to the cytoplasm. The enzyme catalyses Dipeptidase E catalyzes the hydrolysis of dipeptides Asp-|-Xaa. It does not act on peptides with N-terminal Glu, Asn or Gln, nor does it cleave isoaspartyl peptides.. Hydrolyzes dipeptides containing N-terminal aspartate residues. May play a role in allowing the cell to use peptide aspartate to spare carbon otherwise required for the synthesis of the aspartate family of amino acids. In Actinobacillus pleuropneumoniae serotype 7 (strain AP76), this protein is Peptidase E.